The primary structure comprises 186 residues: Putative manganese efflux pump MntP (186 aa).

Helical transmembrane passes span valine 5–phenylalanine 25, valine 41–isoleucine 61, alanine 72–alanine 92, phenylalanine 107–leucine 127, isoleucine 135–leucine 155, and tyrosine 166–isoleucine 186.

This sequence belongs to the MntP (TC 9.B.29) family.

It is found in the cell membrane. Its function is as follows. Probably functions as a manganese efflux pump. In Bacillus licheniformis (strain ATCC 14580 / DSM 13 / JCM 2505 / CCUG 7422 / NBRC 12200 / NCIMB 9375 / NCTC 10341 / NRRL NRS-1264 / Gibson 46), this protein is Putative manganese efflux pump MntP.